Reading from the N-terminus, the 261-residue chain is Phosphate import ATP-binding protein PstB 1 (261 aa).

The 249-residue stretch at 8–256 folds into the ABC transporter domain; it reads IKVNNLSFYY…PHDSRTREYV (249 aa). 40 to 47 is an ATP binding site; that stretch reads GPSGCGKS.

Belongs to the ABC transporter superfamily. Phosphate importer (TC 3.A.1.7) family. In terms of assembly, the complex is composed of two ATP-binding proteins (PstB), two transmembrane proteins (PstC and PstA) and a solute-binding protein (PstS).

It localises to the cell inner membrane. It carries out the reaction phosphate(out) + ATP + H2O = ADP + 2 phosphate(in) + H(+). In terms of biological role, part of the ABC transporter complex PstSACB involved in phosphate import. Responsible for energy coupling to the transport system. The sequence is that of Phosphate import ATP-binding protein PstB 1 from Nostoc sp. (strain PCC 7120 / SAG 25.82 / UTEX 2576).